Here is a 246-residue protein sequence, read N- to C-terminus: MSKNNRKSPSESATLFKVGTIATGNDKNKWIVKETSNGVKRWTKFIPNSNIKIRNNELVSFNFNFIEKLFPKQTKHIGDIFINSNKIGVGELLFWPMNTQKGLYNIFNLKGCLIAVHNNVSLFDQKFTISDKFADCDIGMFSFNDYVNIEPYLQKNKIKKSSGFGLKFPEFSTKHFSFTGSKPNYVYLEDLEDFVDDESESVTKLNDPIAVFVDNKFGDGSFPIYVGKNAFFIMNPDVMDIMINNQ.

This is an uncharacterized protein from Acanthamoeba polyphaga (Amoeba).